Consider the following 61-residue polypeptide: Cobrotoxin-c (61 aa).

Intrachain disulfides connect Cys3–Cys23, Cys17–Cys40, Cys42–Cys53, and Cys54–Cys59.

It belongs to the three-finger toxin family. Short-chain subfamily. Type I alpha-neurotoxin sub-subfamily. Expressed by the venom gland.

It localises to the secreted. Produces peripheral paralysis by blocking neuromuscular transmission at the postsynaptic site. Binds to the nicotinic acetylcholine receptor. This is Cobrotoxin-c from Naja kaouthia (Monocled cobra).